The primary structure comprises 513 residues: Histidine ammonia-lyase (513 aa).

The segment at residues 143-145 (ASG) is a cross-link (5-imidazolinone (Ala-Gly)). The residue at position 144 (S144) is a 2,3-didehydroalanine (Ser).

Belongs to the PAL/histidase family. Post-translationally, contains an active site 4-methylidene-imidazol-5-one (MIO), which is formed autocatalytically by cyclization and dehydration of residues Ala-Ser-Gly.

The protein localises to the cytoplasm. The enzyme catalyses L-histidine = trans-urocanate + NH4(+). The protein operates within amino-acid degradation; L-histidine degradation into L-glutamate; N-formimidoyl-L-glutamate from L-histidine: step 1/3. This is Histidine ammonia-lyase from Xanthomonas axonopodis pv. citri (strain 306).